A 122-amino-acid chain; its full sequence is Small ribosomal subunit protein bS16 (122 aa).

The disordered stretch occupies residues 85-122 (REAKNNPIKAKPGKRAQERAAEKAQKAADAAAAADAAE). The segment covering 99-110 (RAQERAAEKAQK) has biased composition (basic and acidic residues). A compositionally biased stretch (low complexity) spans 111-122 (AADAAAAADAAE).

The protein belongs to the bacterial ribosomal protein bS16 family.

The protein is Small ribosomal subunit protein bS16 of Rhizobium etli (strain ATCC 51251 / DSM 11541 / JCM 21823 / NBRC 15573 / CFN 42).